The chain runs to 952 residues: UvrABC system protein A (952 aa).

Gly31–Ser38 provides a ligand contact to ATP. A C4-type zinc finger spans residues Cys253 to Cys280. ABC transporter domains lie at Trp309 to Leu591 and Gly611 to Ala938. Position 643–650 (Gly643–Ser650) interacts with ATP. A C4-type zinc finger spans residues Cys742–Cys768.

The protein belongs to the ABC transporter superfamily. UvrA family. Forms a heterotetramer with UvrB during the search for lesions.

Its subcellular location is the cytoplasm. In terms of biological role, the UvrABC repair system catalyzes the recognition and processing of DNA lesions. UvrA is an ATPase and a DNA-binding protein. A damage recognition complex composed of 2 UvrA and 2 UvrB subunits scans DNA for abnormalities. When the presence of a lesion has been verified by UvrB, the UvrA molecules dissociate. The chain is UvrABC system protein A from Thermus thermophilus (strain ATCC 27634 / DSM 579 / HB8).